Reading from the N-terminus, the 587-residue chain is Barrierpepsin (587 aa).

Positions 1 to 24 (MSAINHLCLKLILASFAIINTITA) are cleaved as a signal peptide. The 349-residue stretch at 45–393 (YATTLDIGTP…DLDNYKISLA (349 aa)) folds into the Peptidase A1 domain. Residue Asp-63 is part of the active site. N-linked (GlcNAc...) asparagine glycans are attached at residues Asn-84, Asn-90, and Asn-268. Residue Asp-287 is part of the active site. Residue Asn-308 is glycosylated (N-linked (GlcNAc...) asparagine). Cys-322 and Cys-358 are joined by a disulfide. Residues Asn-366, Asn-398, Asn-468, Asn-503, and Asn-551 are each glycosylated (N-linked (GlcNAc...) asparagine). The tract at residues 466-505 (SRNCSTKMPGTRSTTVLSKPTQNSAMHQSTGAVTQTSNET) is disordered.

It belongs to the peptidase A1 family.

Its subcellular location is the secreted. It catalyses the reaction Selective cleavage of 6-Leu-|-Lys-7 bond in the pheromone alpha-mating factor.. Its function is as follows. This protein called 'barrier activity' is excreted by yeast cells mating type a. It is probably a protease that cleaves alpha-factor and thus acts as an antagonist of this mating pheromone and establishes optimal pheromone concentration for conjugation. In Saccharomyces cerevisiae (strain ATCC 204508 / S288c) (Baker's yeast), this protein is Barrierpepsin (BAR1).